The following is a 116-amino-acid chain: NADH-ubiquinone oxidoreductase chain 3 (116 aa).

3 consecutive transmembrane segments (helical) span residues 3–23 (LLMTIITITALLSTILAIVSF), 56–76 (FFLIAILFLLFDLEIALLLPL), and 85–105 (PLLTFTWATAVLFLLTLGLIY).

It belongs to the complex I subunit 3 family.

Its subcellular location is the mitochondrion membrane. It catalyses the reaction a ubiquinone + NADH + 5 H(+)(in) = a ubiquinol + NAD(+) + 4 H(+)(out). Functionally, core subunit of the mitochondrial membrane respiratory chain NADH dehydrogenase (Complex I) that is believed to belong to the minimal assembly required for catalysis. Complex I functions in the transfer of electrons from NADH to the respiratory chain. The immediate electron acceptor for the enzyme is believed to be ubiquinone. The protein is NADH-ubiquinone oxidoreductase chain 3 (MT-ND3) of Paralichthys olivaceus (Bastard halibut).